The primary structure comprises 196 residues: SPPVCGTELLEVGEECDCGSPTNCRNPCCDATTCKLHSWVECESGECCEQCRFIKAGNVCRPQRSECDIAESCTGQSADCPTDDIQRNGQPCLNNFGYCYNGMCPIMYHQCIALFGASATVSPDSCFDSNLDGQGLFYCRRERARIFPCAKEDVKCGRLFCNYFQSSCLYQYSGDIDFGMVDDGTKCAEGKVCNSN.

The Disintegrin domain occupies 2–88 (PPVCGTELLE…DCPTDDIQRN (87 aa)). Residues Val-4, Leu-9, Glu-11, Glu-14, and Asp-17 each contribute to the Ca(2+) site. Disulfide bonds link Cys-5–Cys-34, Cys-16–Cys-29, Cys-18–Cys-24, Cys-28–Cys-51, Cys-42–Cys-48, Cys-47–Cys-73, Cys-60–Cys-80, Cys-67–Cys-99, Cys-92–Cys-104, Cys-111–Cys-161, Cys-126–Cys-168, Cys-139–Cys-149, and Cys-156–Cys-193. Positions 66–68 (ECD) match the D/ECD-tripeptide motif.

The protein belongs to the venom metalloproteinase (M12B) family. P-III subfamily. P-IIIa sub-subfamily. In terms of assembly, monomer. Zn(2+) serves as cofactor. Post-translationally, glycosylated. As to expression, expressed by the venom gland.

The protein localises to the secreted. Functionally, the hemorrhagic metalloproteinase-disintegrin-like bothrojarin-1 is a potent inhibitor of collagen-induced platelet aggregation by blockage of alpha-2/beta-1 (ITGA2/ITGB1) integrin. It does not present any fibrinogen-clotting activity. The chain is Zinc metalloproteinase-disintegrin-like bothrojarin-3 from Bothrops jararaca (Jararaca).